Consider the following 537-residue polypeptide: Probable glucomannan 4-beta-mannosyltransferase 15 (537 aa).

Residues 50–70 (FIVPLFKCIVVMCLIISLLVF) form a helical membrane-spanning segment. The active site involves Asp-150. The substrate site is built by Asp-209 and Asp-211. Residue Asp-303 is part of the active site. The next 4 membrane-spanning stretches (helical) occupy residues 382–402 (IVVH…SVFL), 418–438 (VITL…IFWV), 494–514 (EMMM…FGNA), and 515–535 (FLYL…VGFV).

The protein belongs to the glycosyltransferase 2 family. Plant cellulose synthase-like A subfamily.

Its subcellular location is the golgi apparatus membrane. It catalyses the reaction GDP-mannose + (glucomannan)n = GDP + (glucomannan)n+1.. Probable mannan synthase which consists of a 4-beta-mannosyltransferase activity on mannan using GDP-mannose. The beta-1,4-mannan product is the backbone for galactomannan synthesis by galactomannan galactosyltransferase. Galactomannan is a noncellulosic polysaccharides of plant cell wall. The chain is Probable glucomannan 4-beta-mannosyltransferase 15 from Arabidopsis thaliana (Mouse-ear cress).